A 417-amino-acid chain; its full sequence is Tryptophan decarboxylase (417 aa).

Lys263 carries the N6-(pyridoxal phosphate)lysine modification.

Belongs to the group II decarboxylase family. It depends on pyridoxal 5'-phosphate as a cofactor.

The protein localises to the cytoplasm. It carries out the reaction L-tryptophan + H(+) = tryptamine + CO2. Its activity is regulated as follows. Inhibited by (S)-alpha-fluoromethyltryptophan. Its function is as follows. Catalyzes the decarboxylation of tryptophan to tryptamine. Tryptamine is a neurotransmitter that induces the release of serotonin, which is suggested to modulate gastrointestinal motility. Therefore, the tryptophan decarboxylase from the gut bacteria Clostridium sporogenes (strain ATCC 15579) may influence host brain and behavior. Has weak activity with tyrosine. Activity against phenylalanine is undetectable. This Clostridium sporogenes (strain ATCC 15579) protein is Tryptophan decarboxylase.